Consider the following 469-residue polypeptide: MTTKTRFAPSPTGFLHVGGARTALYSWLQARANNGEFVLRIEDTDIERSTQAACDAILEGMNWLGLTWDEGPYYQTKRFDRYNEIIAQMLEKGTAYKCYCSRERIDALRESQAANGEAQKYDGCCRDLPARDTDEPFVVRFKNPIGGSVVFDDHVRGRIEFSNDALDDLIIARTDGVPTYNFCVVVDDWDMGITCVVRGEDHINNTPRQINILKALGAPIPEYAHVSMILGDDGAKLSKRHGAVSVMQYRDDGYLPEALLNYLVRLGWSHGDQEVFSLEEMKQYFKLDDINKAPSAFNTDKLVWLNQHYIKTLDPEYVATHLQWHMDDQKIDTSNGPALAEVVTALAERAKTLKELAASSRYFYEDFADFDAEQAKKHLRGVALEPLQLVQQKLAALTEWTVEAIHQAIEQTATELDVGMGKVGMPLRVSVTGAGQSPGLDITLFLIGRSRSEQRISKAIEFVADRINS.

Positions 9-19 match the 'HIGH' region motif; the sequence is PSPTGFLHVGG. Zn(2+)-binding residues include Cys98, Cys100, Cys125, and Asp127. The 'KMSKS' region signature appears at 236–240; that stretch reads KLSKR. Lys239 lines the ATP pocket.

Belongs to the class-I aminoacyl-tRNA synthetase family. Glutamate--tRNA ligase type 1 subfamily. In terms of assembly, monomer. Requires Zn(2+) as cofactor.

The protein localises to the cytoplasm. The catalysed reaction is tRNA(Glu) + L-glutamate + ATP = L-glutamyl-tRNA(Glu) + AMP + diphosphate. Catalyzes the attachment of glutamate to tRNA(Glu) in a two-step reaction: glutamate is first activated by ATP to form Glu-AMP and then transferred to the acceptor end of tRNA(Glu). In Shewanella sp. (strain W3-18-1), this protein is Glutamate--tRNA ligase.